Consider the following 128-residue polypeptide: Fluoride-specific ion channel FluC (128 aa).

A run of 4 helical transmembrane segments spans residues 4–24, 37–57, 72–92, and 101–121; these read LLLV…VGVQ, TFIV…WLAL, VGVM…ALMI, and FTYT…GLLI. Positions 76 and 79 each coordinate Na(+).

This sequence belongs to the fluoride channel Fluc/FEX (TC 1.A.43) family.

The protein localises to the cell inner membrane. It catalyses the reaction fluoride(in) = fluoride(out). With respect to regulation, na(+) is not transported, but it plays an essential structural role and its presence is essential for fluoride channel function. Fluoride-specific ion channel. Important for reducing fluoride concentration in the cell, thus reducing its toxicity. The chain is Fluoride-specific ion channel FluC from Caulobacter sp. (strain K31).